Consider the following 89-residue polypeptide: Elongation factor 1-beta (89 aa).

This sequence belongs to the EF-1-beta/EF-1-delta family.

In terms of biological role, promotes the exchange of GDP for GTP in EF-1-alpha/GDP, thus allowing the regeneration of EF-1-alpha/GTP that could then be used to form the ternary complex EF-1-alpha/GTP/AAtRNA. The protein is Elongation factor 1-beta of Methanobrevibacter smithii (strain ATCC 35061 / DSM 861 / OCM 144 / PS).